The chain runs to 509 residues: Histidine ammonia-lyase (509 aa).

The 5-imidazolinone (Ala-Gly) cross-link spans 142-144; that stretch reads ASG. A 2,3-didehydroalanine (Ser) modification is found at S143.

It belongs to the PAL/histidase family. Contains an active site 4-methylidene-imidazol-5-one (MIO), which is formed autocatalytically by cyclization and dehydration of residues Ala-Ser-Gly.

The protein localises to the cytoplasm. It catalyses the reaction L-histidine = trans-urocanate + NH4(+). It participates in amino-acid degradation; L-histidine degradation into L-glutamate; N-formimidoyl-L-glutamate from L-histidine: step 1/3. This Pseudomonas aeruginosa (strain LESB58) protein is Histidine ammonia-lyase.